The sequence spans 395 residues: Nucleoside diphosphate kinase homolog 7 (395 aa).

The DM10 domain maps to 22 to 110; that stretch reads QSERFAFIAE…YTARQLGSRK (89 aa).

It belongs to the NDK family. In terms of assembly, component of sperm flagellar doublet microtubules. Component of the gamma-tubulin ring complex. In terms of tissue distribution, widely expressed. Expressed in the flagellum of epididymal sperm but not in testicular sperm (at protein level).

It is found in the cytoplasm. The protein localises to the cytoskeleton. It localises to the microtubule organizing center. The protein resides in the centrosome. Its subcellular location is the nucleus. It is found in the spindle. The protein localises to the cilium axoneme. It localises to the flagellum axoneme. The protein resides in the cell projection. Its subcellular location is the cilium. Functionally, possesses an intrinsic kinase activity. Displays 3'-5' exonuclease activity with a preference for single-stranded DNA. Does not seem to have nucleoside diphosphate kinase activity. Functional component of the gamma-tubulin ring complex, implicated in the regulation of the microtubule-nucleating activity of the gamma-tubulin ring complex in centrosomes, in a kinase activity-dependent manner. Part of the dynein-decorated doublet microtubules (DMTs) in cilia axoneme, which is required for motile cilia beating. In Rattus norvegicus (Rat), this protein is Nucleoside diphosphate kinase homolog 7 (Nme7).